Reading from the N-terminus, the 78-residue chain is Acyl carrier protein (78 aa).

Residues 4–78 form the Carrier domain; it reads AEIKDKVYDI…QQAIDYIVKK (75 aa). An O-(pantetheine 4'-phosphoryl)serine modification is found at serine 39.

Belongs to the acyl carrier protein (ACP) family. Post-translationally, 4'-phosphopantetheine is transferred from CoA to a specific serine of apo-ACP by AcpS. This modification is essential for activity because fatty acids are bound in thioester linkage to the sulfhydryl of the prosthetic group.

It localises to the cytoplasm. It participates in lipid metabolism; fatty acid biosynthesis. In terms of biological role, carrier of the growing fatty acid chain in fatty acid biosynthesis. This chain is Acyl carrier protein, found in Chlorobium limicola (strain DSM 245 / NBRC 103803 / 6330).